The following is an 82-amino-acid chain: Sulfur carrier protein TusA (82 aa).

Cysteine 19 acts as the Cysteine persulfide intermediate in catalysis.

Belongs to the sulfur carrier protein TusA family. In terms of assembly, interacts with IscS.

It localises to the cytoplasm. It functions in the pathway tRNA modification. Sulfur carrier protein involved in sulfur trafficking in the cell. Part of a sulfur-relay system required for 2-thiolation during synthesis of 2-thiouridine of the modified wobble base 5-methylaminomethyl-2-thiouridine (mnm(5)s(2)U) in tRNA. Interacts with IscS and stimulates its cysteine desulfurase activity. Accepts an activated sulfur from IscS, which is then transferred to TusD, and thus determines the direction of sulfur flow from IscS to 2-thiouridine formation. Also appears to be involved in sulfur transfer for the biosynthesis of molybdopterin. In Edwardsiella ictaluri (strain 93-146), this protein is Sulfur carrier protein TusA.